The primary structure comprises 250 residues: DNA repair protein RecO (250 aa).

The protein belongs to the RecO family.

Its function is as follows. Involved in DNA repair and RecF pathway recombination. The chain is DNA repair protein RecO from Syntrophomonas wolfei subsp. wolfei (strain DSM 2245B / Goettingen).